Reading from the N-terminus, the 273-residue chain is MNRIAIGLHYDGAAFSGWQSQPHRNTVQDYLEDSIERFAGVRLLTTVAGRTDAGVHALGQVIHLDTTLDRTTFSWVRGINAFLPPSIALQWARPVDESFHARFLAFERMYYYALYTGPHRVPLAHGRAGYLMLPPGQRLDVDAMQAASRCLLGEQDFSSFRAAECQAKSPVKTMYDVTLKADGNWVFLRFRASAFLHHMVRNLMGCLVAVGRGRYPPEWLAEVLAARDRKLAAPTFMPDGLYLADVKYPEAYKIPAADPSASLFHGVFRHDAA.

Asp52 functions as the Nucleophile in the catalytic mechanism. Tyr110 lines the substrate pocket.

It belongs to the tRNA pseudouridine synthase TruA family. Homodimer.

It catalyses the reaction uridine(38/39/40) in tRNA = pseudouridine(38/39/40) in tRNA. Its function is as follows. Formation of pseudouridine at positions 38, 39 and 40 in the anticodon stem and loop of transfer RNAs. In Cupriavidus pinatubonensis (strain JMP 134 / LMG 1197) (Cupriavidus necator (strain JMP 134)), this protein is tRNA pseudouridine synthase A.